Here is a 488-residue protein sequence, read N- to C-terminus: 3-octaprenyl-4-hydroxybenzoate carboxy-lyase (488 aa).

Asn172 provides a ligand contact to Mn(2+). Residues 175–177, 189–191, and 194–195 contribute to the prenylated FMN site; these read IYR, RWL, and RG. Residue Glu238 participates in Mn(2+) binding. The active-site Proton donor is Asp287.

It belongs to the UbiD family. Homohexamer. Requires prenylated FMN as cofactor. Mn(2+) serves as cofactor.

The protein localises to the cell membrane. The enzyme catalyses a 4-hydroxy-3-(all-trans-polyprenyl)benzoate + H(+) = a 2-(all-trans-polyprenyl)phenol + CO2. Its pathway is cofactor biosynthesis; ubiquinone biosynthesis. Catalyzes the decarboxylation of 3-octaprenyl-4-hydroxy benzoate to 2-octaprenylphenol, an intermediate step in ubiquinone biosynthesis. The protein is 3-octaprenyl-4-hydroxybenzoate carboxy-lyase of Pseudomonas fluorescens (strain ATCC BAA-477 / NRRL B-23932 / Pf-5).